A 352-amino-acid chain; its full sequence is MANIDKDKLKAIEMAMGQIEKQFGKGSVMKLGEQGAPQMDAVSTGCLDLDIALGIGGVPKGRIIEIYGPESSGKTTVALHVVAEAQKLGGAAAYIDAEHALDPVYAKRLGVNIDDLVVSQPDTGEQALEITEALVRSGAIDVLVVDSVAALVPRAEIEGEMGDSHVGLQARLMSQALRKLTGTINKSNCVVIFINQLREKVGIMFGNPETTPGGRALKFYASVRMDIRRIDSIKQGDGITGNRTRVKIVKNKVAPPFKQAEFDIMYNEGISKEGNIVDVGVKENIVQKSGAWFSYGDIRLGQGRENAKQYLKENPAVALDIENQIREKYSLPLAKAVESTSVEENTEESVES.

68 to 75 (GPESSGKT) provides a ligand contact to ATP.

This sequence belongs to the RecA family.

It is found in the cytoplasm. In terms of biological role, can catalyze the hydrolysis of ATP in the presence of single-stranded DNA, the ATP-dependent uptake of single-stranded DNA by duplex DNA, and the ATP-dependent hybridization of homologous single-stranded DNAs. It interacts with LexA causing its activation and leading to its autocatalytic cleavage. This Clostridium perfringens (strain ATCC 13124 / DSM 756 / JCM 1290 / NCIMB 6125 / NCTC 8237 / Type A) protein is Protein RecA.